A 493-amino-acid polypeptide reads, in one-letter code: Galactose-1-phosphate uridylyltransferase 2 (493 aa).

The protein belongs to the galactose-1-phosphate uridylyltransferase type 2 family.

It is found in the cytoplasm. The enzyme catalyses alpha-D-galactose 1-phosphate + UDP-alpha-D-glucose = alpha-D-glucose 1-phosphate + UDP-alpha-D-galactose. It participates in carbohydrate metabolism; galactose metabolism. The sequence is that of Galactose-1-phosphate uridylyltransferase 2 (galT2) from Streptococcus pneumoniae (strain ATCC BAA-255 / R6).